The primary structure comprises 203 residues: N-(5'-phosphoribosyl)anthranilate isomerase (203 aa).

It belongs to the TrpF family.

The enzyme catalyses N-(5-phospho-beta-D-ribosyl)anthranilate = 1-(2-carboxyphenylamino)-1-deoxy-D-ribulose 5-phosphate. Its pathway is amino-acid biosynthesis; L-tryptophan biosynthesis; L-tryptophan from chorismate: step 3/5. This is N-(5'-phosphoribosyl)anthranilate isomerase from Thermoanaerobacter sp. (strain X514).